The following is a 377-amino-acid chain: Protein RecA (377 aa).

Residue 66–73 participates in ATP binding; that stretch reads GPESSGKT. Positions 329–377 are disordered; the sequence is VGVRPEEPTAEPGADAAVTSAAAATDDTAKTVSAPAAKTTKSKAAAAKS. The segment covering 342–377 has biased composition (low complexity); that stretch reads ADAAVTSAAAATDDTAKTVSAPAAKTTKSKAAAAKS.

It belongs to the RecA family.

The protein localises to the cytoplasm. Can catalyze the hydrolysis of ATP in the presence of single-stranded DNA, the ATP-dependent uptake of single-stranded DNA by duplex DNA, and the ATP-dependent hybridization of homologous single-stranded DNAs. It interacts with LexA causing its activation and leading to its autocatalytic cleavage. The polypeptide is Protein RecA (Streptomyces avermitilis (strain ATCC 31267 / DSM 46492 / JCM 5070 / NBRC 14893 / NCIMB 12804 / NRRL 8165 / MA-4680)).